Consider the following 320-residue polypeptide: (+)-corvol ether B synthase/(+)-corvol ether A synthase ((2E,6E)-farnesyl diphosphate cyclizing) (320 aa).

Asp78 and Asp83 together coordinate Mg(2+). The DDXXXD motif signature appears at 78–83 (DDLFVD). Arg171 contacts substrate. Mg(2+) contacts are provided by Asn217, Ser221, and Glu225.

It belongs to the terpene synthase family. Mg(2+) is required as a cofactor.

The enzyme catalyses (2E,6E)-farnesyl diphosphate + H2O = (+)-corvol ether B + diphosphate. It carries out the reaction (2E,6E)-farnesyl diphosphate + H2O = (+)-corvol ether A + diphosphate. Its pathway is secondary metabolite biosynthesis; terpenoid biosynthesis. Catalyzes the conversion of (2E,6E)-farnesyl diphosphate (FPP) into (+)-corvol ether A and (+)-corvol ether B via a 1,10-cyclization, which requires isomerization of FPP to nerolidyl diphosphate (NPP) and then abstraction of the pyrophosphate from intermediate NPP leading to a (E,Z)-germacradienyl (helminthogermacradienyl) cation. The preferred substrate is (2E,6E)-farnesyl diphosphate (FPP), however geranyl diphosphate (GPP) is also able to produce small amounts of several acyclic and cyclic monoterpenes, with linalool as the main product. This Kitasatospora setae (strain ATCC 33774 / DSM 43861 / JCM 3304 / KCC A-0304 / NBRC 14216 / KM-6054) (Streptomyces setae) protein is (+)-corvol ether B synthase/(+)-corvol ether A synthase ((2E,6E)-farnesyl diphosphate cyclizing).